A 356-amino-acid chain; its full sequence is Arginine kinase (356 aa).

Residues 8 to 91 form the Phosphagen kinase N-terminal domain; sequence EKLEAGFKKL…FDPIIEDYHG (84 aa). 64–68 contacts substrate; that stretch reads GVGIY. The 238-residue stretch at 119–356 folds into the Phosphagen kinase C-terminal domain; the sequence is YVISTRVRCG…LELIKIEGSL (238 aa). ATP is bound by residues 122–126 and histidine 185; that span reads STRVR. Glutamate 225 serves as a coordination point for substrate. Arginine 229 provides a ligand contact to ATP. Cysteine 271 lines the substrate pocket. ATP is bound by residues 280–284 and 309–314; these read RASVH and RGSTGE. Glutamate 314 contacts substrate.

This sequence belongs to the ATP:guanido phosphotransferase family.

The enzyme catalyses L-arginine + ATP = N(omega)-phospho-L-arginine + ADP + H(+). In Schistocerca americana (American grasshopper), this protein is Arginine kinase (ARGK).